Here is a 412-residue protein sequence, read N- to C-terminus: Acyl-[acyl-carrier-protein] hydrolase FATB3, chloroplastic (412 aa).

Low complexity predominate over residues 1–25 (MVAAAASSAFFSFPTPGTSPKPGKF). The N-terminal 50 residues, 1–50 (MVAAAASSAFFSFPTPGTSPKPGKFGNWPSSLSIPFNPKSNHNGGIQVKA), are a transit peptide targeting the chloroplast. The tract at residues 1 to 63 (MVAAAASSAF…AHPKANGSAV (63 aa)) is disordered. Residues 28–44 (WPSSLSIPFNPKSNHNG) show a composition bias toward polar residues. Residues Asn-310, His-312, and Cys-347 contribute to the active site. The tract at residues 393–412 (NAGATGAVSTGKTSNGNSVS) is disordered. Polar residues predominate over residues 399–412 (AVSTGKTSNGNSVS).

This sequence belongs to the acyl-ACP thioesterase family.

It is found in the plastid. It localises to the chloroplast. The catalysed reaction is tetradecanoyl-[ACP] + H2O = tetradecanoate + holo-[ACP] + H(+). Its function is as follows. Plays an essential role in chain termination during de novo fatty acid synthesis. Possesses thioesterase activity for medium chain acyl-ACPs. Main substrate is 14:0. In Cuphea viscosissima (Blue waxweed), this protein is Acyl-[acyl-carrier-protein] hydrolase FATB3, chloroplastic.